The chain runs to 443 residues: Glutamate-1-semialdehyde 2,1-aminomutase (443 aa).

K281 is subject to N6-(pyridoxal phosphate)lysine.

Belongs to the class-III pyridoxal-phosphate-dependent aminotransferase family. HemL subfamily. In terms of assembly, homodimer. Pyridoxal 5'-phosphate serves as cofactor.

It is found in the cytoplasm. The enzyme catalyses (S)-4-amino-5-oxopentanoate = 5-aminolevulinate. The protein operates within porphyrin-containing compound metabolism; protoporphyrin-IX biosynthesis; 5-aminolevulinate from L-glutamyl-tRNA(Glu): step 2/2. This Leptospira interrogans serogroup Icterohaemorrhagiae serovar Lai (strain 56601) protein is Glutamate-1-semialdehyde 2,1-aminomutase.